Here is a 90-residue protein sequence, read N- to C-terminus: UPF0297 protein lwe1516 (90 aa).

This sequence belongs to the UPF0297 family.

This is UPF0297 protein lwe1516 from Listeria welshimeri serovar 6b (strain ATCC 35897 / DSM 20650 / CCUG 15529 / CIP 8149 / NCTC 11857 / SLCC 5334 / V8).